Reading from the N-terminus, the 95-residue chain is Small ribosomal subunit protein bS6 (95 aa).

This sequence belongs to the bacterial ribosomal protein bS6 family.

Its function is as follows. Binds together with bS18 to 16S ribosomal RNA. The polypeptide is Small ribosomal subunit protein bS6 (Clostridium novyi (strain NT)).